The following is a 309-amino-acid chain: Beta-ketoacyl-[acyl-carrier-protein] synthase III (309 aa).

Active-site residues include cysteine 111 and histidine 236. The ACP-binding stretch occupies residues glutamine 237–arginine 241. Asparagine 266 is an active-site residue.

This sequence belongs to the thiolase-like superfamily. FabH family. As to quaternary structure, homodimer.

Its subcellular location is the cytoplasm. It carries out the reaction malonyl-[ACP] + acetyl-CoA + H(+) = 3-oxobutanoyl-[ACP] + CO2 + CoA. It participates in lipid metabolism; fatty acid biosynthesis. Catalyzes the condensation reaction of fatty acid synthesis by the addition to an acyl acceptor of two carbons from malonyl-ACP. Catalyzes the first condensation reaction which initiates fatty acid synthesis and may therefore play a role in governing the total rate of fatty acid production. Possesses both acetoacetyl-ACP synthase and acetyl transacylase activities. Its substrate specificity determines the biosynthesis of branched-chain and/or straight-chain of fatty acids. In Aquifex aeolicus (strain VF5), this protein is Beta-ketoacyl-[acyl-carrier-protein] synthase III.